Here is a 981-residue protein sequence, read N- to C-terminus: Protein deadlock (981 aa).

The tract at residues 1-60 is required for interaction with rhi/rhino; it reads MEKLDKIRMSQKLSCWQHILTTLGTSSKTEQEWNTFFKGFLESWRKPYCIQTSCDPSIPL. Disordered stretches follow at residues 72-195, 274-307, 327-352, 375-446, 554-586, and 642-662; these read LQEN…ACAP, IMDKPKNKQQPQTPPPFLLNNEYTESSDDSDDQL, SRNEDCSPAPEKVKLKGERPAQNKKE, LRKS…PNNI, GLDDENVPEDEPRKEAKTAEQLPKPEPSTETLK, and LVHQPLAESNRNQRDEATAAR. Polar residues-rich tracts occupy residues 104–113 and 150–160; these read PSKSHSTGST and NHTTSIFSKAQ. Residues 167 to 191 show a composition bias toward basic and acidic residues; that stretch reads KLSSTKKRPDTCAPTDDSRKNREPR. Basic and acidic residues predominate over residues 337–352; it reads EKVKLKGERPAQNKKE. Basic residues predominate over residues 377–390; that stretch reads KSVKKSAKQQKPRV. Residues 409 to 419 show a composition bias toward basic and acidic residues; sequence TQDKQSTHEMI. The span at 422-446 shows a compositional bias: polar residues; the sequence is QAKTISEASGQQTSQVQSSLSPNNI. The segment covering 652–662 has biased composition (basic and acidic residues); it reads RNQRDEATAAR.

Component of the Rhino-Deadlock-Cutoff (RDC) complex, composed of rhi/rhino, del/deadlock and cuff/cutoff. Interacts (via N-terminus) with rhi/rhino (via C-terminus); this interaction is direct. Interacts (via C-terminus) with cuff/cutoff; this interaction is direct.

It localises to the nucleus. Its subcellular location is the cytoplasm. The protein localises to the cytoskeleton. The protein resides in the microtubule organizing center. It is found in the centrosome. It localises to the chromosome. Developmental protein involved in oogenesis. Required for germline maintenance, stability of mitotic spindles, localization of patterning determinants, oocyte growth and fusome biogenesis in males and females. Also required for dorso-ventral and antero-posterior patterning of oocyte and eggshell. May be involved in microtubule function during oogenesis. Part of a rhi-dependent transcription machinery that enables the generation of piRNA precursors from heterochromatin while maintaining the suppression of transposon-encoded promoters and enhancers. Component of the RDC complex (rhi, del and cuff) which binds to repressive H3K9me3 marks in the piRNA clusters. RDC promotes the bidirectional transcription of piRNA clusters at these sites by interacting with Moonshiner which forms a complex with the transcription initiation factors TfIIA-S and Trf2. This mechanism allows transcription to occur in piRNA clusters despite the lack of proper promoter elements and in the presence of the repressive H3K9me3 mark. As part of the RDC complex, involved in suppression of splicing. In Drosophila melanogaster (Fruit fly), this protein is Protein deadlock (del).